The sequence spans 98 residues: Complement inhibitor RaCI1 (98 aa).

A signal peptide spans methionine 1–threonine 20. Intrachain disulfides connect cysteine 33–cysteine 57, cysteine 38–cysteine 59, and cysteine 53–cysteine 74. The disordered stretch occupies residues threonine 79–asparagine 98. The segment covering aspartate 88–asparagine 98 has biased composition (basic and acidic residues).

Belongs to the RaCI family. As to expression, expressed in salivary glands.

It localises to the secreted. Functionally, complement inhibitor. Prevents complement-mediated C5 activation by binding to C5. Binds C5 at a different binding site than the other tick complement inhibitors OmCI and CirpT1, and the drug eculizumab. Inhibits the complement in human and guinea pig but not in other species tested (rabbit, rat, mouse, and pig). The protein is Complement inhibitor RaCI1 of Rhipicephalus appendiculatus (Brown ear tick).